The chain runs to 399 residues: Argininosuccinate synthase (399 aa).

Residues 10–18 (AYSGGVDTS) and Ala38 contribute to the ATP site. Tyr89 is a binding site for L-citrulline. Gly119 provides a ligand contact to ATP. Residues Thr121, Asn125, and Asp126 each contribute to the L-aspartate site. Residue Asn125 coordinates L-citrulline. Residues Arg129, Ser177, Ser186, Glu262, and Tyr274 each coordinate L-citrulline.

Belongs to the argininosuccinate synthase family. Type 1 subfamily. Homotetramer.

It is found in the cytoplasm. The catalysed reaction is L-citrulline + L-aspartate + ATP = 2-(N(omega)-L-arginino)succinate + AMP + diphosphate + H(+). It functions in the pathway amino-acid biosynthesis; L-arginine biosynthesis; L-arginine from L-ornithine and carbamoyl phosphate: step 2/3. The polypeptide is Argininosuccinate synthase (Acaryochloris marina (strain MBIC 11017)).